The chain runs to 200 residues: Dephospho-CoA kinase (200 aa).

A DPCK domain is found at 3–200; it reads VLGLTGSIGM…LSGKPAAATR (198 aa). Residue 11 to 16 coordinates ATP; sequence GMGKTT.

Belongs to the CoaE family.

The protein resides in the cytoplasm. It carries out the reaction 3'-dephospho-CoA + ATP = ADP + CoA + H(+). It participates in cofactor biosynthesis; coenzyme A biosynthesis; CoA from (R)-pantothenate: step 5/5. In terms of biological role, catalyzes the phosphorylation of the 3'-hydroxyl group of dephosphocoenzyme A to form coenzyme A. This chain is Dephospho-CoA kinase, found in Brucella abortus (strain 2308).